A 132-amino-acid polypeptide reads, in one-letter code: Small ribosomal subunit protein uS8 (132 aa).

It belongs to the universal ribosomal protein uS8 family. As to quaternary structure, part of the 30S ribosomal subunit. Contacts proteins S5 and S12.

One of the primary rRNA binding proteins, it binds directly to 16S rRNA central domain where it helps coordinate assembly of the platform of the 30S subunit. This Thermoanaerobacter pseudethanolicus (strain ATCC 33223 / 39E) (Clostridium thermohydrosulfuricum) protein is Small ribosomal subunit protein uS8.